We begin with the raw amino-acid sequence, 486 residues long: Glutamyl-tRNA(Gln) amidotransferase subunit A (486 aa).

Catalysis depends on charge relay system residues K75 and S150. S174 serves as the catalytic Acyl-ester intermediate.

This sequence belongs to the amidase family. GatA subfamily. As to quaternary structure, heterotrimer of A, B and C subunits.

It catalyses the reaction L-glutamyl-tRNA(Gln) + L-glutamine + ATP + H2O = L-glutaminyl-tRNA(Gln) + L-glutamate + ADP + phosphate + H(+). Functionally, allows the formation of correctly charged Gln-tRNA(Gln) through the transamidation of misacylated Glu-tRNA(Gln) in organisms which lack glutaminyl-tRNA synthetase. The reaction takes place in the presence of glutamine and ATP through an activated gamma-phospho-Glu-tRNA(Gln). The sequence is that of Glutamyl-tRNA(Gln) amidotransferase subunit A from Nostoc sp. (strain PCC 7120 / SAG 25.82 / UTEX 2576).